Consider the following 120-residue polypeptide: MLDSSIMLIVKWFVGLMLIMMMVAVSLFCIQLSDVNLYKQQVNYQIERHGGLTKEAGAYLKDYSEKQYQGALSVKSDQLNKKVNFGDVVDYQVVANLKIILFNLPDVEMKFHGSATSQVR.

Residues 8–28 (LIVKWFVGLMLIMMMVAVSLF) form a helical membrane-spanning segment.

The protein localises to the membrane. This is an uncharacterized protein from Bacillus anthracis.